A 411-amino-acid polypeptide reads, in one-letter code: Tyrosine--tRNA ligase (411 aa).

Positions 50–59 (PTRPDLHLGH) match the 'HIGH' region motif. The 'KMSKS' region signature appears at 236–240 (KMSKS). Lys239 contacts ATP. The region spanning 345–409 (VSMAKLVVLA…GKDKFARLVL (65 aa)) is the S4 RNA-binding domain.

The protein belongs to the class-I aminoacyl-tRNA synthetase family. TyrS type 2 subfamily. As to quaternary structure, homodimer.

The protein resides in the cytoplasm. It catalyses the reaction tRNA(Tyr) + L-tyrosine + ATP = L-tyrosyl-tRNA(Tyr) + AMP + diphosphate + H(+). Catalyzes the attachment of tyrosine to tRNA(Tyr) in a two-step reaction: tyrosine is first activated by ATP to form Tyr-AMP and then transferred to the acceptor end of tRNA(Tyr). The protein is Tyrosine--tRNA ligase of Deinococcus radiodurans (strain ATCC 13939 / DSM 20539 / JCM 16871 / CCUG 27074 / LMG 4051 / NBRC 15346 / NCIMB 9279 / VKM B-1422 / R1).